Consider the following 1028-residue polypeptide: Beta-galactosidase (1028 aa).

Residues Asn104 and Asp203 each contribute to the substrate site. Asp203 provides a ligand contact to Na(+). Positions 418, 420, and 463 each coordinate Mg(2+). Residues Glu463 and 539–542 (EYAH) each bind substrate. The active-site Proton donor is the Glu463. Glu539 acts as the Nucleophile in catalysis. A Mg(2+)-binding site is contributed by Asn599. 2 residues coordinate Na(+): Phe603 and Asn606. Residues Asn606 and Trp1003 each contribute to the substrate site.

The protein belongs to the glycosyl hydrolase 2 family. As to quaternary structure, homotetramer. The cofactor is Mg(2+). It depends on Na(+) as a cofactor.

The enzyme catalyses Hydrolysis of terminal non-reducing beta-D-galactose residues in beta-D-galactosides.. The sequence is that of Beta-galactosidase from Enterobacter cloacae.